A 146-amino-acid chain; its full sequence is Large ribosomal subunit protein uL15 (146 aa).

A disordered region spans residues 1–46 (MAIELHDLKPAPGAHKAKTRVGRGEGSKGKTAGRGTKGTGARKNVP). Over residues 29 to 43 (GKTAGRGTKGTGARK) the composition is skewed to low complexity.

This sequence belongs to the universal ribosomal protein uL15 family. As to quaternary structure, part of the 50S ribosomal subunit.

In terms of biological role, binds to the 23S rRNA. This is Large ribosomal subunit protein uL15 from Cutibacterium acnes (strain DSM 16379 / KPA171202) (Propionibacterium acnes).